The sequence spans 67 residues: Large ribosomal subunit protein bL32 (67 aa).

Residues 1-19 (MAVPKRKQSRANTHARRSQ) are compositionally biased toward basic residues. The tract at residues 1-20 (MAVPKRKQSRANTHARRSQW) is disordered.

This sequence belongs to the bacterial ribosomal protein bL32 family.

The chain is Large ribosomal subunit protein bL32 from Leifsonia xyli subsp. xyli (strain CTCB07).